The sequence spans 187 residues: dCTP deaminase, dUMP-forming (187 aa).

Residues 101–106 and D119 each bind dCTP; that span reads KSSLGR. E129 (proton donor/acceptor) is an active-site residue. DCTP is bound by residues Q148, Y162, and Q174.

Belongs to the dCTP deaminase family. Homotrimer.

It catalyses the reaction dCTP + 2 H2O = dUMP + NH4(+) + diphosphate. It functions in the pathway pyrimidine metabolism; dUMP biosynthesis; dUMP from dCTP: step 1/1. Bifunctional enzyme that catalyzes both the deamination of dCTP to dUTP and the hydrolysis of dUTP to dUMP without releasing the toxic dUTP intermediate. The protein is dCTP deaminase, dUMP-forming of Corynebacterium kroppenstedtii (strain DSM 44385 / JCM 11950 / CIP 105744 / CCUG 35717).